The primary structure comprises 273 residues: Ribosomal RNA small subunit methyltransferase A (273 aa).

S-adenosyl-L-methionine contacts are provided by Asn18, Leu20, Gly45, Glu66, Asp91, and Asn113.

It belongs to the class I-like SAM-binding methyltransferase superfamily. rRNA adenine N(6)-methyltransferase family. RsmA subfamily.

Its subcellular location is the cytoplasm. The catalysed reaction is adenosine(1518)/adenosine(1519) in 16S rRNA + 4 S-adenosyl-L-methionine = N(6)-dimethyladenosine(1518)/N(6)-dimethyladenosine(1519) in 16S rRNA + 4 S-adenosyl-L-homocysteine + 4 H(+). Its function is as follows. Specifically dimethylates two adjacent adenosines (A1518 and A1519) in the loop of a conserved hairpin near the 3'-end of 16S rRNA in the 30S particle. May play a critical role in biogenesis of 30S subunits. This is Ribosomal RNA small subunit methyltransferase A from Escherichia coli (strain SE11).